Here is a 238-residue protein sequence, read N- to C-terminus: Probable transcriptional regulatory protein SPH_2064 (238 aa).

Belongs to the TACO1 family. YeeN subfamily.

It is found in the cytoplasm. The chain is Probable transcriptional regulatory protein SPH_2064 from Streptococcus pneumoniae (strain Hungary19A-6).